A 281-amino-acid polypeptide reads, in one-letter code: N-acetylmuramic acid 6-phosphate etherase (281 aa).

The SIS domain occupies 63 to 226 (IVPRMKQGGR…TTSVMIQLGR (164 aa)). Glu-91 serves as the catalytic Proton donor. Glu-122 is an active-site residue.

It belongs to the GCKR-like family. MurNAc-6-P etherase subfamily. Homodimer.

It catalyses the reaction N-acetyl-D-muramate 6-phosphate + H2O = N-acetyl-D-glucosamine 6-phosphate + (R)-lactate. It participates in amino-sugar metabolism; N-acetylmuramate degradation. Functionally, specifically catalyzes the cleavage of the D-lactyl ether substituent of MurNAc 6-phosphate, producing GlcNAc 6-phosphate and D-lactate. The chain is N-acetylmuramic acid 6-phosphate etherase from Bacteroides fragilis (strain ATCC 25285 / DSM 2151 / CCUG 4856 / JCM 11019 / LMG 10263 / NCTC 9343 / Onslow / VPI 2553 / EN-2).